We begin with the raw amino-acid sequence, 232 residues long: MSKMRNLVEEKFLEFYESWVIQLELYLHQLLIAHNNNTMSETELRHLISKLTTHHKAYYTAKWAAIREDVLAFFGSVWLNPLENACSWLTGWKPSMVFRMVDRLRKSRVVLVEAQVKKLEELRVKTKFDEQKIEREMERYQVAMADRKMVELARLGCHVGGESVMVVEAAVRGLSMGLEKMVKAADCVRLKTLKGILDILTPPQCVEFLAAAATFQVQLRRWGNRRHYVTHS.

In terms of domain architecture, DOG1 spans 9-229 (EEKFLEFYES…RRWGNRRHYV (221 aa)).

In Arabidopsis thaliana (Mouse-ear cress), this protein is Protein DOG1-like 4.